A 199-amino-acid polypeptide reads, in one-letter code: Probable GTP-binding protein EngB (199 aa).

Positions 28-199 (DLPEIALAGR…DSWDAILEQV (172 aa)) constitute an EngB-type G domain. GTP-binding positions include 36–43 (GRSNVGKS), 63–67 (GKTQL), 81–84 (DVPG), 148–151 (TKAD), and 180–182 (FSS). Residues Ser43 and Thr65 each contribute to the Mg(2+) site.

Belongs to the TRAFAC class TrmE-Era-EngA-EngB-Septin-like GTPase superfamily. EngB GTPase family. Mg(2+) is required as a cofactor.

Its function is as follows. Necessary for normal cell division and for the maintenance of normal septation. The sequence is that of Probable GTP-binding protein EngB from Streptococcus pyogenes serotype M1.